The primary structure comprises 1893 residues: Plexin-A4 (1893 aa).

An N-terminal signal peptide occupies residues 1 to 23; sequence MKAMPWNWTCLLSHLLVVGMGSS. The Sema domain maps to 24-506; that stretch reads TLLPRQPPQL…SERQLTRVPV (483 aa). Residues 24–1236 lie on the Extracellular side of the membrane; the sequence is TLLPRQPPQL…IAPDSPLSLP (1213 aa). 10 cysteine pairs are disulfide-bonded: cysteine 94/cysteine 103, cysteine 129/cysteine 137, cysteine 283/cysteine 404, cysteine 299/cysteine 355, cysteine 373/cysteine 392, cysteine 509/cysteine 526, cysteine 515/cysteine 557, cysteine 518/cysteine 535, cysteine 529/cysteine 541, and cysteine 592/cysteine 611. A PSI 1 domain is found at 508–558; the sequence is SCGQYRSCGECLGSGDPHCGWCVLHNTCTRKERCERSREPRRFASEMKQCV. Residue asparagine 654 is glycosylated (N-linked (GlcNAc...) asparagine). 2 PSI domains span residues 654–701 and 802–855; these read NCSV…EDCP and KCGA…SKCT. 4 consecutive IPT/TIG domains span residues 857–951, 953–1036, 1039–1138, and 1141–1229; these read PRIT…YYFM, LTLA…FQYV, PTIV…FTYY, and PVFE…YIAP. N-linked (GlcNAc...) asparagine glycans are attached at residues asparagine 1006, asparagine 1131, and asparagine 1179. Residues 1237 to 1257 form a helical membrane-spanning segment; it reads AIVSIAVAGGLLIIFIVAVLI. Topologically, residues 1258–1893 are cytoplasmic; that stretch reads AYKRKSRESD…QVITLMSLDS (636 aa). Lysine 1349 carries the N6-acetyllysine modification.

Belongs to the plexin family. Interacts with NRP1 and NRP2. As to expression, expressed in the developing nervous system. Widely expressed in both the central and peripheral nervous systems. Expressed in the peripheral ganglia, somatosensory, olfactory, visual, auditory and equilibrium systems.

The protein resides in the cell membrane. Functionally, coreceptor for SEMA3A. Necessary for signaling by class 3 semaphorins and subsequent remodeling of the cytoskeleton. Plays a role in axon guidance in the developing nervous system. Class 3 semaphorins bind to a complex composed of a neuropilin and a plexin. The plexin modulates the affinity of the complex for specific semaphorins, and its cytoplasmic domain is required for the activation of down-stream signaling events in the cytoplasm. The polypeptide is Plexin-A4 (Plxna4) (Mus musculus (Mouse)).